The primary structure comprises 553 residues: MEAGGDNAVPAPGGVEDLVDTQFPREEAGDSERVHASTLDPGDGDPEDTGSKDQPSSLLSPLPQTEAASSTCEHWETAAASDSSPPGEPESNSEGQGEDPDDGGDPSDEDWRSQRKHVFVLSEAGKPIYSRYGSVEALSATMGVMTALVSFVQSAGDAIRAIYAEDHKLVFLQQGPLLLVAVSRTPQSAAQLRGELLAVHAQIVSTLTRASVARIFAHKQNYDLRRLLAGSERTLDRLLDSVEQDPGALLLGAVRCVPLARPLRDALGTLLRRCTAPGLALSVLAVGGRLITVAQERNVLAECRLDPADLQLLLDWVGAPAFAAGEAWAPVCLPRFNPDGFFYAYVARLDSMPVCLLLLGTNREAFHAMAACRRLVEDGMHNLGALRTLGEAANFSNGPAASAPAYSVQAVGAPGLRHFLYKPLDIPEQHRQLPQFTSPELEAPYSREEERQRLSDLYHRLHARLHSTSRPLRLIYHVAEKETLLAWVTSKFELYTCLSPLVTKAGAILVVTKLLRWVRKEEDRLFIRYPPKYSTPPSTSADQAPNNGLFTGL.

Position 1 is an N-acetylmethionine (Met-1). Disordered stretches follow at residues 1-111 (MEAG…DEDW) and 534-553 (STPPSTSADQAPNNGLFTGL). Basic and acidic residues predominate over residues 23-35 (FPREEAGDSERVH). Positions 52-72 (KDQPSSLLSPLPQTEAASSTC) are enriched in polar residues. The residue at position 57 (Ser-57) is a Phosphoserine. Low complexity predominate over residues 78–95 (AAASDSSPPGEPESNSEG). Residues 96–108 (QGEDPDDGGDPSD) show a composition bias toward acidic residues. Polar residues predominate over residues 541 to 553 (ADQAPNNGLFTGL).

This sequence belongs to the MON1/SAND family. As to quaternary structure, interacts with CCNT2; down-regulates CCNT2-mediated activation of viral promoters during herpes simplex virus 1/HHV-1 infection. Found in a complex with RMC1, CCZ1 MON1A and MON1B.

The protein is Vacuolar fusion protein MON1 homolog B (Mon1b) of Mus musculus (Mouse).